Consider the following 375-residue polypeptide: Queuine tRNA-ribosyltransferase (375 aa).

D94 acts as the Proton acceptor in catalysis. Substrate contacts are provided by residues 94-98 (DSGGF), D148, Q191, and G218. An RNA binding region spans residues 249–255 (GVGTPED). D268 acts as the Nucleophile in catalysis. Positions 273-277 (TRIAR) are RNA binding; important for wobble base 34 recognition. 4 residues coordinate Zn(2+): C306, C308, C311, and H337.

It belongs to the queuine tRNA-ribosyltransferase family. In terms of assembly, homodimer. Within each dimer, one monomer is responsible for RNA recognition and catalysis, while the other monomer binds to the replacement base PreQ1. Requires Zn(2+) as cofactor.

It carries out the reaction 7-aminomethyl-7-carbaguanine + guanosine(34) in tRNA = 7-aminomethyl-7-carbaguanosine(34) in tRNA + guanine. It functions in the pathway tRNA modification; tRNA-queuosine biosynthesis. Its function is as follows. Catalyzes the base-exchange of a guanine (G) residue with the queuine precursor 7-aminomethyl-7-deazaguanine (PreQ1) at position 34 (anticodon wobble position) in tRNAs with GU(N) anticodons (tRNA-Asp, -Asn, -His and -Tyr). Catalysis occurs through a double-displacement mechanism. The nucleophile active site attacks the C1' of nucleotide 34 to detach the guanine base from the RNA, forming a covalent enzyme-RNA intermediate. The proton acceptor active site deprotonates the incoming PreQ1, allowing a nucleophilic attack on the C1' of the ribose to form the product. After dissociation, two additional enzymatic reactions on the tRNA convert PreQ1 to queuine (Q), resulting in the hypermodified nucleoside queuosine (7-(((4,5-cis-dihydroxy-2-cyclopenten-1-yl)amino)methyl)-7-deazaguanosine). This is Queuine tRNA-ribosyltransferase from Caldanaerobacter subterraneus subsp. tengcongensis (strain DSM 15242 / JCM 11007 / NBRC 100824 / MB4) (Thermoanaerobacter tengcongensis).